The following is a 137-amino-acid chain: Small ribosomal subunit protein uS12 (137 aa).

The disordered stretch occupies residues 1 to 57 (MPTINQLVRKPRKSKVEKSKSPALNVGYNSLKRVPTNESAPQKRGVATRVGTMTPKK). Asp-102 is subject to 3-methylthioaspartic acid.

It belongs to the universal ribosomal protein uS12 family. In terms of assembly, part of the 30S ribosomal subunit. Contacts proteins S8 and S17. May interact with IF1 in the 30S initiation complex.

Its function is as follows. With S4 and S5 plays an important role in translational accuracy. Interacts with and stabilizes bases of the 16S rRNA that are involved in tRNA selection in the A site and with the mRNA backbone. Located at the interface of the 30S and 50S subunits, it traverses the body of the 30S subunit contacting proteins on the other side and probably holding the rRNA structure together. The combined cluster of proteins S8, S12 and S17 appears to hold together the shoulder and platform of the 30S subunit. The polypeptide is Small ribosomal subunit protein uS12 (Streptococcus gordonii (strain Challis / ATCC 35105 / BCRC 15272 / CH1 / DL1 / V288)).